The sequence spans 159 residues: SsrA-binding protein (159 aa).

Belongs to the SmpB family.

It localises to the cytoplasm. In terms of biological role, required for rescue of stalled ribosomes mediated by trans-translation. Binds to transfer-messenger RNA (tmRNA), required for stable association of tmRNA with ribosomes. tmRNA and SmpB together mimic tRNA shape, replacing the anticodon stem-loop with SmpB. tmRNA is encoded by the ssrA gene; the 2 termini fold to resemble tRNA(Ala) and it encodes a 'tag peptide', a short internal open reading frame. During trans-translation Ala-aminoacylated tmRNA acts like a tRNA, entering the A-site of stalled ribosomes, displacing the stalled mRNA. The ribosome then switches to translate the ORF on the tmRNA; the nascent peptide is terminated with the 'tag peptide' encoded by the tmRNA and targeted for degradation. The ribosome is freed to recommence translation, which seems to be the essential function of trans-translation. The polypeptide is SsrA-binding protein (Coxiella burnetii (strain RSA 331 / Henzerling II)).